The following is a 97-amino-acid chain: Large ribosomal subunit protein bL31 (97 aa).

The disordered stretch occupies residues 76-97 (KTPKKAKGKTEEYTKHRSLNEL). Over residues 83–97 (GKTEEYTKHRSLNEL) the composition is skewed to basic and acidic residues.

The protein belongs to the bacterial ribosomal protein bL31 family. Type A subfamily. Part of the 50S ribosomal subunit.

Its function is as follows. Binds the 23S rRNA. This chain is Large ribosomal subunit protein bL31, found in Mycoplasma pneumoniae (strain ATCC 29342 / M129 / Subtype 1) (Mycoplasmoides pneumoniae).